The following is a 338-amino-acid chain: MVLTLLKAKPERKLAKQICKVVLDHFEKQYSKELGDAWNTVRDILTSPSCWQYAVLLNRFNYPFELEKDLHLKGYHSLLQGSLPYYPKSMKCYLSRTPHRMPSERHQTGNLKKYYLLNAASLLPVLALELRDGEKVLDLCAAPGGKSLALLQCAYPGYLHCNEYDSLRLRWLRQTLESFIPQPLVNVIKVSELDGREMGDAQPETFDKVLVDAPCSNDRSWLFSSDSQKAACRISQRRNLPLLQMELLRSAIKALRPGGLLVYSTCTLSKAENQDVISEVLNSYSNIMPVDIKEMARTCSRDFTFAPTGQECGLLVIPDKGKAWGPMYVAKLKKSWTT.

S-adenosyl-L-methionine is bound by residues C140–K146, E163, D194, and D212. The active-site Nucleophile is C266.

The protein belongs to the class I-like SAM-binding methyltransferase superfamily. RsmB/NOP family.

The protein localises to the mitochondrion matrix. It carries out the reaction cytidine(34) in mitochondrial tRNA + S-adenosyl-L-methionine = 5-methylcytidine(34) in mitochondrial tRNA + S-adenosyl-L-homocysteine + H(+). Mitochondrial tRNA methyltransferase that mediates methylation of cytosine to 5-methylcytosine (m5C) at position 34 of mt-tRNA(Met). mt-tRNA(Met) methylation at cytosine(34) takes place at the wobble position of the anticodon and initiates the formation of 5-formylcytosine (f(5)c) at this position. mt-tRNA(Met) containing the f(5)c modification at the wobble position enables recognition of the AUA codon in addition to the AUG codon, expanding codon recognition in mitochondrial translation. The protein is tRNA (cytosine(34)-C(5))-methyltransferase, mitochondrial of Bos taurus (Bovine).